Reading from the N-terminus, the 473-residue chain is Catalase easC (473 aa).

The span at 1–15 (MASEVSVASSGSEHS) shows a compositional bias: low complexity. The tract at residues 1–31 (MASEVSVASSGSEHSGAQKCPFQDPGLSSMD) is disordered. H54 is an active-site residue. Y344 provides a ligand contact to heme. Residues 369 to 388 (DGARPEKAEMAPQKVPSQEH) are disordered.

This sequence belongs to the catalase family. Heme serves as cofactor.

Its pathway is alkaloid biosynthesis; ergot alkaloid biosynthesis. In terms of biological role, catalase; part of the gene cluster that mediates the biosynthesis of fungal ergot alkaloid. DmaW catalyzes the first step of ergot alkaloid biosynthesis by condensing dimethylallyl diphosphate (DMAP) and tryptophan to form 4-dimethylallyl-L-tryptophan. The second step is catalyzed by the methyltransferase easF that methylates 4-dimethylallyl-L-tryptophan in the presence of S-adenosyl-L-methionine, resulting in the formation of 4-dimethylallyl-L-abrine. The catalase easC and the FAD-dependent oxidoreductase easE then transform 4-dimethylallyl-L-abrine to chanoclavine-I which is further oxidized by easD in the presence of NAD(+), resulting in the formation of chanoclavine-I aldehyde. Agroclavine dehydrogenase easG then mediates the conversion of chanoclavine-I aldehyde to agroclavine via a non-enzymatic adduct reaction: the substrate is an iminium intermediate that is formed spontaneously from chanoclavine-I aldehyde in the presence of glutathione. The presence of easA is not required to complete this reaction. Further conversion of agroclavine to paspalic acid is a two-step process involving oxidation of agroclavine to elymoclavine and of elymoclavine to paspalic acid, the second step being performed by the elymoclavine oxidase cloA. Paspalic acid is then further converted to D-lysergic acid. Ergopeptines are assembled from D-lysergic acid and three different amino acids by the D-lysergyl-peptide-synthetases composed each of a monomudular and a trimodular nonribosomal peptide synthetase subunit. LpsB and lpsC encode the monomodular subunits responsible for D-lysergic acid activation and incorporation into the ergopeptine backbone. LpsA1 and A2 subunits encode the trimodular nonribosomal peptide synthetase assembling the tripeptide portion of ergopeptines. LpsA1 is responsible for formation of the major ergopeptine, ergotamine, and lpsA2 for alpha-ergocryptine, the minor ergopeptine of the total alkaloid mixture elaborated by C.purpurea. D-lysergyl-tripeptides are assembled by the nonribosomal peptide synthetases and released as N-(D-lysergyl-aminoacyl)-lactams. Cyclolization of the D-lysergyl-tripeptides is performed by the Fe(2+)/2-ketoglutarate-dependent dioxygenase easH which introduces a hydroxyl group into N-(D-lysergyl-aminoacyl)-lactam at alpha-C of the aminoacyl residue followed by spontaneous condensation with the terminal lactam carbonyl group. The sequence is that of Catalase easC from Claviceps purpurea (Ergot fungus).